A 283-amino-acid polypeptide reads, in one-letter code: Undecaprenyl-diphosphatase (283 aa).

Helical transmembrane passes span Gly-40–Phe-60, Ala-85–Phe-105, Leu-113–Ala-133, Ile-153–Ser-173, Ala-193–Leu-213, Leu-227–Phe-247, and Val-259–Met-279.

Belongs to the UppP family.

It is found in the cell inner membrane. The catalysed reaction is di-trans,octa-cis-undecaprenyl diphosphate + H2O = di-trans,octa-cis-undecaprenyl phosphate + phosphate + H(+). Catalyzes the dephosphorylation of undecaprenyl diphosphate (UPP). Confers resistance to bacitracin. The polypeptide is Undecaprenyl-diphosphatase (Chlorobium limicola (strain DSM 245 / NBRC 103803 / 6330)).